The chain runs to 322 residues: 4-hydroxythreonine-4-phosphate dehydrogenase (322 aa).

Residue T132 coordinates substrate. Residues H160, H205, and H260 each contribute to the a divalent metal cation site. Substrate contacts are provided by K268, N277, and R286.

Belongs to the PdxA family. As to quaternary structure, homodimer. The cofactor is Zn(2+). Mg(2+) is required as a cofactor. Co(2+) serves as cofactor.

Its subcellular location is the cytoplasm. The enzyme catalyses 4-(phosphooxy)-L-threonine + NAD(+) = 3-amino-2-oxopropyl phosphate + CO2 + NADH. It functions in the pathway cofactor biosynthesis; pyridoxine 5'-phosphate biosynthesis; pyridoxine 5'-phosphate from D-erythrose 4-phosphate: step 4/5. Catalyzes the NAD(P)-dependent oxidation of 4-(phosphooxy)-L-threonine (HTP) into 2-amino-3-oxo-4-(phosphooxy)butyric acid which spontaneously decarboxylates to form 3-amino-2-oxopropyl phosphate (AHAP). This Xanthomonas oryzae pv. oryzae (strain PXO99A) protein is 4-hydroxythreonine-4-phosphate dehydrogenase.